Reading from the N-terminus, the 876-residue chain is Phosphoenolpyruvate carboxylase (876 aa).

Catalysis depends on residues histidine 138 and lysine 543.

The protein belongs to the PEPCase type 1 family. It depends on Mg(2+) as a cofactor.

It carries out the reaction oxaloacetate + phosphate = phosphoenolpyruvate + hydrogencarbonate. Functionally, forms oxaloacetate, a four-carbon dicarboxylic acid source for the tricarboxylic acid cycle. This is Phosphoenolpyruvate carboxylase from Aliivibrio salmonicida (strain LFI1238) (Vibrio salmonicida (strain LFI1238)).